Consider the following 398-residue polypeptide: Tryptophan synthase beta chain (398 aa).

Lys-89 bears the N6-(pyridoxal phosphate)lysine mark.

Belongs to the TrpB family. Tetramer of two alpha and two beta chains. Requires pyridoxal 5'-phosphate as cofactor.

The enzyme catalyses (1S,2R)-1-C-(indol-3-yl)glycerol 3-phosphate + L-serine = D-glyceraldehyde 3-phosphate + L-tryptophan + H2O. Its pathway is amino-acid biosynthesis; L-tryptophan biosynthesis; L-tryptophan from chorismate: step 5/5. Its function is as follows. The beta subunit is responsible for the synthesis of L-tryptophan from indole and L-serine. The chain is Tryptophan synthase beta chain from Methanopyrus kandleri (strain AV19 / DSM 6324 / JCM 9639 / NBRC 100938).